The primary structure comprises 485 residues: Glutamate--tRNA ligase 1 (485 aa).

Positions 10–20 (PSPTGAIHIGN) match the 'HIGH' region motif. The 'KMSKS' region signature appears at 252-256 (KLSKR). Residue Lys-255 participates in ATP binding.

It belongs to the class-I aminoacyl-tRNA synthetase family. Glutamate--tRNA ligase type 1 subfamily. As to quaternary structure, monomer.

The protein resides in the cytoplasm. It catalyses the reaction tRNA(Glu) + L-glutamate + ATP = L-glutamyl-tRNA(Glu) + AMP + diphosphate. Functionally, catalyzes the attachment of glutamate to tRNA(Glu) in a two-step reaction: glutamate is first activated by ATP to form Glu-AMP and then transferred to the acceptor end of tRNA(Glu). In Thermoanaerobacter sp. (strain X514), this protein is Glutamate--tRNA ligase 1.